Reading from the N-terminus, the 180-residue chain is DNA-directed RNA polymerase subunit omega (180 aa).

Residues 100–180 (ISKSGTPILP…NSDDSETTNS (81 aa)) are disordered. 2 stretches are compositionally biased toward acidic residues: residues 137–151 (EVDVDAELEVGDEET) and 159–180 (AEAETEAETTEVNSDDSETTNS).

Belongs to the RNA polymerase subunit omega family. The RNAP catalytic core consists of 2 alpha, 1 beta, 1 beta' and 1 omega subunit. When a sigma factor is associated with the core the holoenzyme is formed, which can initiate transcription.

The catalysed reaction is RNA(n) + a ribonucleoside 5'-triphosphate = RNA(n+1) + diphosphate. Its function is as follows. Promotes RNA polymerase assembly. Latches the N- and C-terminal regions of the beta' subunit thereby facilitating its interaction with the beta and alpha subunits. The chain is DNA-directed RNA polymerase subunit omega from Pelagibacter ubique (strain HTCC1062).